The primary structure comprises 220 residues: Kinetochore protein Spc25 (220 aa).

A coiled-coil region spans residues 79–114 (HLTQEVEAIKLRNLAMKDQIKQQKMLNNQRKNEIME).

The protein belongs to the SPC25 family. Component of the Ndc80 complex, which is composed of Ndc80, Nuf2 and Spc25.

It is found in the nucleus. Its subcellular location is the chromosome. It localises to the centromere. The protein resides in the kinetochore. Its function is as follows. Acts as a component of the essential kinetochore-associated Ndc80 complex, which is required for chromosome segregation and spindle checkpoint activity during meiosis and mitosis. Required for kinetochore integrity and the organization of stable microtubule binding sites in the outer plate of the kinetochore. Participates in SAC signaling that responds specifically to disruptions in spindle microtubule dynamics. The NDC80 complex synergistically enhances the affinity of the SKA1 complex for microtubules and may allow the NDC80 complex to track depolymerizing microtubules. The polypeptide is Kinetochore protein Spc25 (Drosophila orena (Fruit fly)).